Reading from the N-terminus, the 449-residue chain is Methionine aminopeptidase 2-2 (449 aa).

The disordered stretch occupies residues 1–91; it reads MAAQAAPELA…PRIPLTTLFP (91 aa). The segment covering 15 to 28 has biased composition (polar residues); the sequence is NKNTGSAEASTVPA. Over residues 34–50 the composition is skewed to acidic residues; sequence DDAENEGDSDDDRDDEQ. Over residues 61-75 the composition is skewed to basic residues; that stretch reads KKKKKKRPKKKKKTA. His199 contacts substrate. A divalent metal cation is bound by residues Asp219, Asp230, and His299. A substrate-binding site is contributed by His307. Residues Glu335 and Glu430 each coordinate a divalent metal cation.

The protein belongs to the peptidase M24A family. Methionine aminopeptidase eukaryotic type 2 subfamily. Co(2+) serves as cofactor. Zn(2+) is required as a cofactor. It depends on Mn(2+) as a cofactor. Requires Fe(2+) as cofactor.

Its subcellular location is the cytoplasm. The enzyme catalyses Release of N-terminal amino acids, preferentially methionine, from peptides and arylamides.. Cotranslationally removes the N-terminal methionine from nascent proteins. The N-terminal methionine is often cleaved when the second residue in the primary sequence is small and uncharged (Met-Ala-, Cys, Gly, Pro, Ser, Thr, or Val). This is Methionine aminopeptidase 2-2 from Arthroderma gypseum (strain ATCC MYA-4604 / CBS 118893) (Microsporum gypseum).